The chain runs to 211 residues: NADH-quinone oxidoreductase subunit I (211 aa).

Residues 1-27 form a disordered region; that stretch reads MANTDRPALPHKRAVPPSRADSGPRRR. 2 consecutive 4Fe-4S ferredoxin-type domains span residues 71–101 and 117–146; these read LNRYPDGLEKCIGCELCAWACPADAIYVEGA and RVYQINYLRCIGCGLCIEACPTRALTMTYD. [4Fe-4S] cluster is bound by residues Cys81, Cys84, Cys87, Cys91, Cys126, Cys129, Cys132, and Cys136.

The protein belongs to the complex I 23 kDa subunit family. In terms of assembly, NDH-1 is composed of 14 different subunits. Subunits NuoA, H, J, K, L, M, N constitute the membrane sector of the complex. [4Fe-4S] cluster is required as a cofactor.

The protein localises to the cell membrane. It catalyses the reaction a quinone + NADH + 5 H(+)(in) = a quinol + NAD(+) + 4 H(+)(out). NDH-1 shuttles electrons from NADH, via FMN and iron-sulfur (Fe-S) centers, to quinones in the respiratory chain. The immediate electron acceptor for the enzyme in this species is believed to be menaquinone. Couples the redox reaction to proton translocation (for every two electrons transferred, four hydrogen ions are translocated across the cytoplasmic membrane), and thus conserves the redox energy in a proton gradient. The protein is NADH-quinone oxidoreductase subunit I of Mycobacterium bovis (strain ATCC BAA-935 / AF2122/97).